We begin with the raw amino-acid sequence, 366 residues long: DNA-directed RNA polymerase subunit alpha (366 aa).

The alpha N-terminal domain (alpha-NTD) stretch occupies residues 1–233 (MVREKVRVST…DLFLPFLHAE (233 aa)). Residues 264–366 (KNEIALKSIF…KDEMGFESLE (103 aa)) form an alpha C-terminal domain (alpha-CTD) region.

It belongs to the RNA polymerase alpha chain family. As to quaternary structure, in plastids the minimal PEP RNA polymerase catalytic core is composed of four subunits: alpha, beta, beta', and beta''. When a (nuclear-encoded) sigma factor is associated with the core the holoenzyme is formed, which can initiate transcription.

Its subcellular location is the plastid. It is found in the chloroplast. It carries out the reaction RNA(n) + a ribonucleoside 5'-triphosphate = RNA(n+1) + diphosphate. DNA-dependent RNA polymerase catalyzes the transcription of DNA into RNA using the four ribonucleoside triphosphates as substrates. This Oenothera elata subsp. hookeri (Hooker's evening primrose) protein is DNA-directed RNA polymerase subunit alpha.